Here is a 355-residue protein sequence, read N- to C-terminus: F-box only protein 32 (355 aa).

Residues 62 to 67 carry the Nuclear localization signal motif; sequence KKRKKD. Residues 169–173 carry the Nuclear export signal motif; sequence LLQTL. An F-box domain is found at 223–271; sequence LTFTDLPLCLQLNIMQRLSDGRDLVSLGQVAPDLHVLSEDRLLWKKLCQ. The short motif at 280–295 is the Bipartite nuclear localization signal element; the sequence is RKRLILSDKGQLDWKK.

In terms of assembly, part of the SCF (SKP1-CUL1-F-box) E3 ubiquitin-protein ligase complex SCF(FBXO32) formed of CUL1, SKP1, RBX1 and FBXO32.

The protein resides in the cytoplasm. The protein localises to the nucleus. It participates in protein modification; protein ubiquitination. Its function is as follows. Substrate recognition component of a SCF (SKP1-CUL1-F-box protein) E3 ubiquitin-protein ligase complex which mediates the ubiquitination and subsequent proteasomal degradation of target proteins. Probably recognizes and binds to phosphorylated target proteins during skeletal muscle atrophy. Recognizes TERF1. The polypeptide is F-box only protein 32 (FBXO32) (Bos taurus (Bovine)).